The following is a 313-amino-acid chain: NAD-capped RNA hydrolase NudC (313 aa).

Residue Arg111 coordinates substrate. Residues 168–293 (PRIDPAVICL…DWSSASESKL (126 aa)) form the Nudix hydrolase domain. Positions 202, 218, and 222 each coordinate a divalent metal cation. Residues 203 to 224 (GFVEAGESFEVCVAREIREEIG) carry the Nudix box motif. A substrate-binding site is contributed by 236 to 243 (QQWPFPRS). Glu264 serves as a coordination point for a divalent metal cation.

This sequence belongs to the Nudix hydrolase family. NudC subfamily. In terms of assembly, homodimer. Requires Mg(2+) as cofactor. The cofactor is Mn(2+).

The enzyme catalyses a 5'-end NAD(+)-phospho-ribonucleoside in mRNA + H2O = a 5'-end phospho-adenosine-phospho-ribonucleoside in mRNA + beta-nicotinamide D-ribonucleotide + 2 H(+). It carries out the reaction NAD(+) + H2O = beta-nicotinamide D-ribonucleotide + AMP + 2 H(+). The catalysed reaction is NADH + H2O = reduced beta-nicotinamide D-ribonucleotide + AMP + 2 H(+). Functionally, mRNA decapping enzyme that specifically removes the nicotinamide adenine dinucleotide (NAD) cap from a subset of mRNAs by hydrolyzing the diphosphate linkage to produce nicotinamide mononucleotide (NMN) and 5' monophosphate mRNA. The NAD-cap is present at the 5'-end of some mRNAs and stabilizes RNA against 5'-processing. Has preference for mRNAs with a 5'-end purine. Catalyzes the hydrolysis of a broad range of dinucleotide pyrophosphates. The sequence is that of NAD-capped RNA hydrolase NudC from Mycobacterium tuberculosis (strain ATCC 25177 / H37Ra).